We begin with the raw amino-acid sequence, 183 residues long: Protein SHI RELATED SEQUENCE 6 (183 aa).

Cys-41, Cys-44, Cys-52, Cys-57, Cys-61, and Cys-68 together coordinate Zn(2+). The segment at residues 41-68 (CRDCGNRAKKECLFERCRTCCKSRGYNC) is a DNA-binding region (zn(2)-C6 fungal-type; degenerate). The span at 79–88 (SSATRSSSSP) shows a compositional bias: low complexity. The segment at 79–121 (SSATRSSSSPSERKKKLKIDKQSSPNVSLLPTTTSRQERGFRE) is disordered. Positions 100–113 (QSSPNVSLLPTTTS) are enriched in polar residues. The Required for homo- and heterodimerization signature appears at 157-160 (ISGH).

This sequence belongs to the SHI protein family.

It is found in the nucleus. Transcription activator that binds DNA on 5'-ACTCTAC-3' and promotes auxin homeostasis-regulating gene expression (e.g. YUC genes), as well as genes affecting stamen development, cell expansion and timing of flowering. Synergistically with other SHI-related proteins, regulates gynoecium, stamen and leaf development in a dose-dependent manner, controlling apical-basal patterning. Promotes style and stigma formation, and influences vascular development during gynoecium development. May also have a role in the formation and/or maintenance of the shoot apical meristem (SAM). The polypeptide is Protein SHI RELATED SEQUENCE 6 (SRS6) (Arabidopsis thaliana (Mouse-ear cress)).